A 388-amino-acid chain; its full sequence is MTLKVLVVDDSGFFRRRLCEILSSISDVDVVGTASNGREGVEMALKLKPDVITMDYEMPVMDGITAVKEIMRVQPTPVLMFSSLTYEGARVTFDALEAGAVDFLPKSFEAMSGDASKIKRLLHDRIKEVSRAKYRMSGASAPASVPQPAKPAAPIPVREPPKPAAPVTRPAEPRAKAPPAKPEPKPEVKAAKSRRTPRQDYKVVLIGTSTGGPVALQKILTRLPGAFPAPLVLVQHMPASFTPAFAERLNRLSQLSVKQAENGEILKPGWAYIAPGGKQTLIERVGAQARVKILDGDERLHYKPCVDVTFGSCAKMFPGKVLGVILTGMGADGREGCRMLKETGSVVWSQDEATSVIYGMPMAVATAGLSDEVLALDEFAPRLIDGVG.

A Response regulatory domain is found at 4 to 121 (KVLVVDDSGF…SGDASKIKRL (118 aa)). The residue at position 55 (D55) is a 4-aspartylphosphate. The interval 137–196 (SGASAPASVPQPAKPAAPIPVREPPKPAAPVTRPAEPRAKAPPAKPEPKPEVKAAKSRRT) is disordered. Residues 148–164 (PAKPAAPIPVREPPKPA) show a composition bias toward pro residues. One can recognise a CheB-type methylesterase domain in the interval 197–388 (PRQDYKVVLI…FAPRLIDGVG (192 aa)). Active-site residues include S209, H236, and D332.

The protein belongs to the CheB family. Phosphorylated by CheA. Phosphorylation of the N-terminal regulatory domain activates the methylesterase activity.

The protein resides in the cytoplasm. It catalyses the reaction [protein]-L-glutamate 5-O-methyl ester + H2O = L-glutamyl-[protein] + methanol + H(+). The catalysed reaction is L-glutaminyl-[protein] + H2O = L-glutamyl-[protein] + NH4(+). Involved in chemotaxis. Part of a chemotaxis signal transduction system that modulates chemotaxis in response to various stimuli. Catalyzes the demethylation of specific methylglutamate residues introduced into the chemoreceptors (methyl-accepting chemotaxis proteins or MCP) by CheR. Also mediates the irreversible deamidation of specific glutamine residues to glutamic acid. The sequence is that of Protein-glutamate methylesterase/protein-glutamine glutaminase 4 from Hahella chejuensis (strain KCTC 2396).